A 680-amino-acid chain; its full sequence is MSEKQTPVKELTLQEAQDEIKPLRAKLTKWGKEYYEQDNPTVEDHVYDRAYQRLVQLEEQFPQLVSADSPTQRVGGATESQLTKVRHEIPMLSMGDVFSIEELMDFNQRQQENRDVEVEPEYNLELKIDGLSLSLVYENGKLVQGSTRGNGTIGEDVTANVRTIKSVPAELPEPLSIEVRGECYMPKAAFAKLNAKREAEGLPVFANPRNAAAGSLRQLDPKVTAQRELDTFMYYVPEYQKIGVKTQAEALDRMRELGFNVNPNNRVVHNRDEIEKYIEEYTAQRDKLTYGIDGIVEKVNDLDTEVALGNTVKVPRWEIAYKFPPEEQATIVRDIVWTVGRTGNVTPTAVMDPVQLAGTTVSRASLHNPDYLREKDIRIGDTVYLHKAGDIIPEISKVDLTKRPADSVEYEIPTKCPVCGSELVHLDGEVALRCINPMCPAQIKEGLAHFASRNAMNIDGLGPRIIEQLWDKELIHDVAGLYRLNHDQLLTLDKFGEKSTANLLTSIDNSRNNSVERLLFGLGIRHVGAKAARIIMEHFGDLDSLMKADADEISAISGIGPTIGESIVTYFANQQVVKLIDELREVGVNFAYLGSRSNANPDSEWNGRRVVLTGKLTEMTRGEAKSWLENHGAKVTESVSKKTDIVIAGADAGSKLTKAQNLGIDVWNEQQFSQAMKEEQ.

Residues 44–48, 93–94, and E125 each bind NAD(+); these read DHVYD and SM. Residue K127 is the N6-AMP-lysine intermediate of the active site. R148, E182, K298, and K322 together coordinate NAD(+). 4 residues coordinate Zn(2+): C416, C419, C434, and C439. Residues 600-680 form the BRCT domain; the sequence is NPDSEWNGRR…QFSQAMKEEQ (81 aa).

The protein belongs to the NAD-dependent DNA ligase family. LigA subfamily. Mg(2+) serves as cofactor. Mn(2+) is required as a cofactor.

It catalyses the reaction NAD(+) + (deoxyribonucleotide)n-3'-hydroxyl + 5'-phospho-(deoxyribonucleotide)m = (deoxyribonucleotide)n+m + AMP + beta-nicotinamide D-nucleotide.. Functionally, DNA ligase that catalyzes the formation of phosphodiester linkages between 5'-phosphoryl and 3'-hydroxyl groups in double-stranded DNA using NAD as a coenzyme and as the energy source for the reaction. It is essential for DNA replication and repair of damaged DNA. In Limosilactobacillus reuteri (strain DSM 20016) (Lactobacillus reuteri), this protein is DNA ligase.